The following is a 265-amino-acid chain: Mlc titration factor A (265 aa).

The Zn(2+) site is built by His111, His148, His152, and Glu211.

Belongs to the MtfA family. In terms of assembly, interacts with Mlc. Zn(2+) serves as cofactor.

The protein localises to the cytoplasm. Involved in the modulation of the activity of the glucose-phosphotransferase system (glucose-PTS). Interacts with the transcriptional repressor Mlc, preventing its interaction with DNA and leading to the modulation of expression of genes regulated by Mlc, including ptsG, which encodes the PTS system glucose-specific EIICB component. Functionally, shows zinc-dependent metallopeptidase activity. The polypeptide is Mlc titration factor A (Pectobacterium atrosepticum (strain SCRI 1043 / ATCC BAA-672) (Erwinia carotovora subsp. atroseptica)).